The following is a 374-amino-acid chain: tRNA 2-selenouridine synthase (374 aa).

Residues 12–136 (FLRDVPMLDT…MRGFLLQTID (125 aa)) enclose the Rhodanese domain. The S-selanylcysteine intermediate role is filled by cysteine 95.

It belongs to the SelU family. As to quaternary structure, monomer.

It carries out the reaction 5-methylaminomethyl-2-thiouridine(34) in tRNA + selenophosphate + (2E)-geranyl diphosphate + H2O + H(+) = 5-methylaminomethyl-2-selenouridine(34) in tRNA + (2E)-thiogeraniol + phosphate + diphosphate. The catalysed reaction is 5-methylaminomethyl-2-thiouridine(34) in tRNA + (2E)-geranyl diphosphate = 5-methylaminomethyl-S-(2E)-geranyl-thiouridine(34) in tRNA + diphosphate. The enzyme catalyses 5-methylaminomethyl-S-(2E)-geranyl-thiouridine(34) in tRNA + selenophosphate + H(+) = 5-methylaminomethyl-2-(Se-phospho)selenouridine(34) in tRNA + (2E)-thiogeraniol. It catalyses the reaction 5-methylaminomethyl-2-(Se-phospho)selenouridine(34) in tRNA + H2O = 5-methylaminomethyl-2-selenouridine(34) in tRNA + phosphate. Functionally, involved in the post-transcriptional modification of the uridine at the wobble position (U34) of tRNA(Lys), tRNA(Glu) and tRNA(Gln). Catalyzes the conversion of 2-thiouridine (S2U-RNA) to 2-selenouridine (Se2U-RNA). Acts in a two-step process involving geranylation of 2-thiouridine (S2U) to S-geranyl-2-thiouridine (geS2U) and subsequent selenation of the latter derivative to 2-selenouridine (Se2U) in the tRNA chain. The protein is tRNA 2-selenouridine synthase of Bordetella petrii (strain ATCC BAA-461 / DSM 12804 / CCUG 43448).